The primary structure comprises 261 residues: Cytochrome c oxidase subunit 3 (261 aa).

The Mitochondrial matrix portion of the chain corresponds to 1–15; it reads MTHQTHAYHMVNPSP. The chain crosses the membrane as a helical span at residues 16 to 33; sequence WPLTGAFSALLLTSGLVM. Residues 34–38 are Mitochondrial intermembrane-facing; that stretch reads WFHYN. Residues 39 to 62 traverse the membrane as a helical segment; sequence SITLLTLGLLTNILTMYQWWRDVI. Residues 63 to 77 are Mitochondrial matrix-facing; sequence REGTYQGHHTPIVQK. Residues 78–99 traverse the membrane as a helical segment; the sequence is GLRYGMILFIVSEVFFFAGFFW. Residues 100–129 lie on the Mitochondrial intermembrane side of the membrane; that stretch reads AFYHSSLVPTHDLGGCWPPTGISPLNPLEV. Residues 130–150 form a helical membrane-spanning segment; the sequence is PLLNTSVLLASGVSITWAHHS. The Mitochondrial matrix portion of the chain corresponds to 151–156; it reads LMEGKR. The chain crosses the membrane as a helical span at residues 157 to 178; that stretch reads NHMNQALLITIMLGLYFTILQA. Residues 179 to 198 lie on the Mitochondrial intermembrane side of the membrane; the sequence is SEYFETSFSISDGIYGSTFF. Residues 199 to 224 traverse the membrane as a helical segment; sequence MATGFHGLHVIIGSTFLIVCLLRQLK. At 225-232 the chain is on the mitochondrial matrix side; it reads FHFTSKHH. A helical transmembrane segment spans residues 233–255; that stretch reads FGFEAAAWYWHFVDVVWLFLYVS. Over 256–261 the chain is Mitochondrial intermembrane; it reads IYWWGS.

The protein belongs to the cytochrome c oxidase subunit 3 family. As to quaternary structure, component of the cytochrome c oxidase (complex IV, CIV), a multisubunit enzyme composed of 14 subunits. The complex is composed of a catalytic core of 3 subunits MT-CO1, MT-CO2 and MT-CO3, encoded in the mitochondrial DNA, and 11 supernumerary subunits COX4I, COX5A, COX5B, COX6A, COX6B, COX6C, COX7A, COX7B, COX7C, COX8 and NDUFA4, which are encoded in the nuclear genome. The complex exists as a monomer or a dimer and forms supercomplexes (SCs) in the inner mitochondrial membrane with NADH-ubiquinone oxidoreductase (complex I, CI) and ubiquinol-cytochrome c oxidoreductase (cytochrome b-c1 complex, complex III, CIII), resulting in different assemblies (supercomplex SCI(1)III(2)IV(1) and megacomplex MCI(2)III(2)IV(2)).

It localises to the mitochondrion inner membrane. It carries out the reaction 4 Fe(II)-[cytochrome c] + O2 + 8 H(+)(in) = 4 Fe(III)-[cytochrome c] + 2 H2O + 4 H(+)(out). In terms of biological role, component of the cytochrome c oxidase, the last enzyme in the mitochondrial electron transport chain which drives oxidative phosphorylation. The respiratory chain contains 3 multisubunit complexes succinate dehydrogenase (complex II, CII), ubiquinol-cytochrome c oxidoreductase (cytochrome b-c1 complex, complex III, CIII) and cytochrome c oxidase (complex IV, CIV), that cooperate to transfer electrons derived from NADH and succinate to molecular oxygen, creating an electrochemical gradient over the inner membrane that drives transmembrane transport and the ATP synthase. Cytochrome c oxidase is the component of the respiratory chain that catalyzes the reduction of oxygen to water. Electrons originating from reduced cytochrome c in the intermembrane space (IMS) are transferred via the dinuclear copper A center (CU(A)) of subunit 2 and heme A of subunit 1 to the active site in subunit 1, a binuclear center (BNC) formed by heme A3 and copper B (CU(B)). The BNC reduces molecular oxygen to 2 water molecules using 4 electrons from cytochrome c in the IMS and 4 protons from the mitochondrial matrix. The chain is Cytochrome c oxidase subunit 3 (mt-Co3) from Mus musculus (Mouse).